Here is a 102-residue protein sequence, read N- to C-terminus: Large ribosomal subunit protein uL24 (102 aa).

Belongs to the universal ribosomal protein uL24 family. Part of the 50S ribosomal subunit.

Its function is as follows. One of two assembly initiator proteins, it binds directly to the 5'-end of the 23S rRNA, where it nucleates assembly of the 50S subunit. One of the proteins that surrounds the polypeptide exit tunnel on the outside of the subunit. In Agrobacterium fabrum (strain C58 / ATCC 33970) (Agrobacterium tumefaciens (strain C58)), this protein is Large ribosomal subunit protein uL24.